Consider the following 255-residue polypeptide: Zinc import ATP-binding protein ZnuC (255 aa).

In terms of domain architecture, ABC transporter spans 4 to 219; that stretch reads VDVDGLSLRY…PEYRALFGTG (216 aa). 36–43 provides a ligand contact to ATP; that stretch reads GPNGSGKT. Positions 234-255 are disordered; that stretch reads EHDHHDGCAHGQATEDRTEAAE.

The protein belongs to the ABC transporter superfamily. Zinc importer (TC 3.A.1.15.5) family. The complex is composed of two ATP-binding proteins (ZnuC), two transmembrane proteins (ZnuB) and a solute-binding protein (ZnuA).

It is found in the cell inner membrane. The enzyme catalyses Zn(2+)(out) + ATP(in) + H2O(in) = Zn(2+)(in) + ADP(in) + phosphate(in) + H(+)(in). In terms of biological role, part of the ABC transporter complex ZnuABC involved in zinc import. Responsible for energy coupling to the transport system. This Roseobacter denitrificans (strain ATCC 33942 / OCh 114) (Erythrobacter sp. (strain OCh 114)) protein is Zinc import ATP-binding protein ZnuC.